We begin with the raw amino-acid sequence, 685 residues long: Heat shock protein homolog SSE1 (685 aa).

The interval 651–685 (QALRSNQEASKMADLSAKLAAQRKAEAEAKENAKE) is disordered. The span at 673-685 (RKAEAEAKENAKE) shows a compositional bias: basic and acidic residues.

This sequence belongs to the heat shock protein 70 family.

It localises to the cytoplasm. This is Heat shock protein homolog SSE1 (SSE1) from Naumovozyma castellii (Yeast).